The sequence spans 631 residues: Dolichyl-diphosphooligosaccharide--protein glycosyltransferase subunit 2 (631 aa).

Residues 1–22 (MAPPGSSTVFLLALTIIASTWA) form the signal peptide. Residues 23-540 (LTPTHYLTKH…REPEKRPPTV (518 aa)) lie on the Lumenal side of the membrane. Asn-106 is a glycosylation site (N-linked (GlcNAc...) asparagine). A Glycyl lysine isopeptide (Lys-Gly) (interchain with G-Cter in ubiquitin) cross-link involves residue Lys-154. A helical membrane pass occupies residues 541 to 561 (VSNTFTALILSPLLLLFALWI). Topologically, residues 562-571 (RIGANVSNFT) are cytoplasmic. Residues 572–592 (FAPSTIIFHLGHAAMLGLMYV) form a helical membrane-spanning segment. Topologically, residues 593–596 (YWTQ) are lumenal. The chain crosses the membrane as a helical span at residues 597 to 617 (LNMFQTLKYLAILGSVTFLAG). Topologically, residues 618-631 (NRMLAQQAVKRTAH) are cytoplasmic.

The protein belongs to the SWP1 family. Component of the oligosaccharyltransferase (OST) complex. OST exists in two different complex forms which contain common core subunits RPN1, RPN2, OST48, OST4, DAD1 and TMEM258, either STT3A or STT3B as catalytic subunits, and form-specific accessory subunits. STT3A complex assembly occurs through the formation of 3 subcomplexes. Subcomplex 1 contains RPN1 and TMEM258, subcomplex 2 contains the STT3A-specific subunits STT3A, DC2/OSTC, and KCP2 as well as the core subunit OST4, and subcomplex 3 contains RPN2, DAD1, and OST48. The STT3A complex can form stable complexes with the Sec61 complex or with both the Sec61 and TRAP complexes. Interacts with DDI2. Interacts with TMEM35A/NACHO. Expressed in all tissues tested.

The protein resides in the endoplasmic reticulum. Its subcellular location is the endoplasmic reticulum membrane. It participates in protein modification; protein glycosylation. Subunit of the oligosaccharyl transferase (OST) complex that catalyzes the initial transfer of a defined glycan (Glc(3)Man(9)GlcNAc(2) in eukaryotes) from the lipid carrier dolichol-pyrophosphate to an asparagine residue within an Asn-X-Ser/Thr consensus motif in nascent polypeptide chains, the first step in protein N-glycosylation. N-glycosylation occurs cotranslationally and the complex associates with the Sec61 complex at the channel-forming translocon complex that mediates protein translocation across the endoplasmic reticulum (ER). All subunits are required for a maximal enzyme activity. The chain is Dolichyl-diphosphooligosaccharide--protein glycosyltransferase subunit 2 from Homo sapiens (Human).